The chain runs to 1177 residues: DNA-directed RNA polymerase subunit beta (1177 aa).

A disordered region spans residues 1-36 (MEGCILADSRQSKTAASPSPSRPQSSSNNSVPGAPN). The segment covering 17–32 (SPSPSRPQSSSNNSVP) has biased composition (low complexity).

The protein belongs to the RNA polymerase beta chain family. The RNAP catalytic core consists of 2 alpha, 1 beta, 1 beta' and 1 omega subunit. When a sigma factor is associated with the core the holoenzyme is formed, which can initiate transcription.

The catalysed reaction is RNA(n) + a ribonucleoside 5'-triphosphate = RNA(n+1) + diphosphate. DNA-dependent RNA polymerase catalyzes the transcription of DNA into RNA using the four ribonucleoside triphosphates as substrates. The protein is DNA-directed RNA polymerase subunit beta of Mycobacterium tuberculosis (strain ATCC 25177 / H37Ra).